A 171-amino-acid chain; its full sequence is Iron-sulfur cluster assembly protein 3 (171 aa).

A mitochondrion-targeting transit peptide spans 1–49 (MLRQTTKRAFLGLASQNPTPFPVVSRLYHPNVIDHYDNPRNVGSFDKND).

The protein belongs to the NifU family. Component of the core Fe-S cluster (ISC) assembly machinery. The cofactor is [2Fe-2S] cluster. In terms of tissue distribution, mostly expressed in flowers and pollen, and, to a lower extent, in leaves and roots.

It is found in the mitochondrion matrix. The protein operates within cofactor biosynthesis; iron-sulfur cluster biosynthesis. Scaffold protein for the de novo synthesis of iron-sulfur (Fe-S) clusters within mitochondria, which is required for maturation of both mitochondrial and cytoplasmic [2Fe-2S] and [4Fe-4S] proteins. First, a [2Fe-2S] cluster is transiently assembled on the scaffold protein ISCU (ISU1, ISU2 or ISU3). In a second step, the cluster is released from ISCU, transferred to a glutaredoxin, followed by the formation of mitochondrial [2Fe-2S] proteins, the synthesis of [4Fe-4S] clusters and their target-specific insertion into the recipient apoproteins. Cluster assembly on ISCU depends on the function of the cysteine desulfurase complex NFS1-ISD11, which serves as the sulfur donor for cluster synthesis, the iron-binding protein frataxin as the putative iron donor, and the electron transfer chain comprised of ferredoxin reductase and ferredoxin, which receive their electrons from NADH. The protein is Iron-sulfur cluster assembly protein 3 (ISU3) of Arabidopsis thaliana (Mouse-ear cress).